The following is a 426-amino-acid chain: Glutamate-1-semialdehyde 2,1-aminomutase (426 aa).

Position 265 is an N6-(pyridoxal phosphate)lysine (Lys-265).

This sequence belongs to the class-III pyridoxal-phosphate-dependent aminotransferase family. HemL subfamily. In terms of assembly, homodimer. Requires pyridoxal 5'-phosphate as cofactor.

The protein resides in the cytoplasm. It carries out the reaction (S)-4-amino-5-oxopentanoate = 5-aminolevulinate. The protein operates within porphyrin-containing compound metabolism; protoporphyrin-IX biosynthesis; 5-aminolevulinate from L-glutamyl-tRNA(Glu): step 2/2. The sequence is that of Glutamate-1-semialdehyde 2,1-aminomutase from Escherichia coli O81 (strain ED1a).